The chain runs to 130 residues: Glycine cleavage system H protein (130 aa).

One can recognise a Lipoyl-binding domain in the interval 24–106 (TFTVGITDHA…YGDGWLYRIT (83 aa)). Lys65 carries the post-translational modification N6-lipoyllysine.

Belongs to the GcvH family. The glycine cleavage system is composed of four proteins: P, T, L and H. It depends on (R)-lipoate as a cofactor.

Its function is as follows. The glycine cleavage system catalyzes the degradation of glycine. The H protein shuttles the methylamine group of glycine from the P protein to the T protein. This is Glycine cleavage system H protein from Coxiella burnetii (strain CbuK_Q154) (Coxiella burnetii (strain Q154)).